Reading from the N-terminus, the 1210-residue chain is Adenine-specific methyltransferase PglX (1210 aa).

Positions 1181–1194 (KQGEHGLTDDDLRG) are enriched in basic and acidic residues. The tract at residues 1181 to 1210 (KQGEHGLTDDDLRGWRPPAATRRRRAAAKQ) is disordered. The span at 1201-1210 (TRRRRAAAKQ) shows a compositional bias: basic residues.

Belongs to the methyltransferase superfamily. PglX adenine methyltransferase family.

It carries out the reaction a 2'-deoxyadenosine in DNA + S-adenosyl-L-methionine = an N(6)-methyl-2'-deoxyadenosine in DNA + S-adenosyl-L-homocysteine + H(+). In terms of biological role, BREX systems (bacteriophage exclusion) provide immunity against bacteriophage. Part of a type 2 BREX system. Probably a DNA methyltransferase, it methylates phage DNA in vitro in an S-adenosyl-L-methionine-dependent manner. Previously called the phage growth limitation (Pgl) system, it confers protection against bacteriophage phiC31. The bacteria allows one cycle of phage infection, but subsequent cycles are impaired, protecting the original bacterial colony. The system undergoes high rates (10(-3) to 10(-4)) of phase reversion, i.e. loss and regain of phiC31 resistance. When the pglW-pglX-pglY-pglZ genes are transformed into a susceptible S.lividans (strain 1326) they confer resistance to infection by phage phiC31 and phiBT1; all 4 genes are necessary. Its function is as follows. Probably a toxic component of a type II toxin-antitoxin (TA) system. The toxic activity is inhibited by its cognate antitoxin PglZ. May be a subtypes G and alpha restriction enzyme that recognizes and cleaves an unknown sequence. Methylates an adenine residue in the same sequence. This chain is Adenine-specific methyltransferase PglX, found in Streptomyces coelicolor (strain ATCC BAA-471 / A3(2) / M145).